Reading from the N-terminus, the 92-residue chain is Islet amyloid polypeptide (92 aa).

The N-terminal stretch at methionine 1 to alanine 22 is a signal peptide. A propeptide spanning residues threonine 23 to glycine 34 is cleaved from the precursor. A disulfide bridge links cysteine 38 with cysteine 43. At tyrosine 73 the chain carries Tyrosine amide. A propeptide spanning residues asparagine 77–leucine 92 is cleaved from the precursor.

This sequence belongs to the calcitonin family. Can form homodimers. Interacts with IDE and INS. Interaction with INS inhibits homodimerization and fibril formation.

It is found in the secreted. Its function is as follows. Amylin/IAPP is a glucoregulatory peptide hormone that plays an important role in the regulation of energy homeostasis. Selectively inhibits insulin-stimulated glucose utilization and glycogen deposition in muscle, while not affecting adipocyte glucose metabolism. IAPP function is mediated by the CALCR-RAMPs (AMYRs) receptor complexes. Amylin can also bind CALCR receptor in the absence of RAMPs, although it is more selective for AMYRs. In Cavia porcellus (Guinea pig), this protein is Islet amyloid polypeptide (IAPP).